The sequence spans 163 residues: Nucleotide-binding protein YajQ (163 aa).

It belongs to the YajQ family.

Functionally, nucleotide-binding protein. The sequence is that of Nucleotide-binding protein YajQ from Shigella flexneri.